The following is a 72-amino-acid chain: uncharacterized protein (72 aa).

The next 2 membrane-spanning stretches (helical) occupy residues 15–35 (WEILVYILVVGFGFALFIGSI) and 50–70 (ILIYVSCKFVFLIWISLMYFI).

It is found in the host membrane. This is an uncharacterized protein from Spiroplasma melliferum (SpV1).